The sequence spans 114 residues: Iron-sulfur cluster insertion protein ErpA (114 aa).

Residues Cys-42, Cys-106, and Cys-108 each coordinate iron-sulfur cluster.

This sequence belongs to the HesB/IscA family. As to quaternary structure, homodimer. The cofactor is iron-sulfur cluster.

Functionally, required for insertion of 4Fe-4S clusters for at least IspG. The protein is Iron-sulfur cluster insertion protein ErpA of Haemophilus influenzae (strain PittGG).